Here is a 204-residue protein sequence, read N- to C-terminus: Probable nicotinate-nucleotide adenylyltransferase (204 aa).

This sequence belongs to the NadD family.

The enzyme catalyses nicotinate beta-D-ribonucleotide + ATP + H(+) = deamido-NAD(+) + diphosphate. Its pathway is cofactor biosynthesis; NAD(+) biosynthesis; deamido-NAD(+) from nicotinate D-ribonucleotide: step 1/1. Its function is as follows. Catalyzes the reversible adenylation of nicotinate mononucleotide (NaMN) to nicotinic acid adenine dinucleotide (NaAD). In Methylacidiphilum infernorum (isolate V4) (Methylokorus infernorum (strain V4)), this protein is Probable nicotinate-nucleotide adenylyltransferase.